A 160-amino-acid polypeptide reads, in one-letter code: MISEASSRPGFITAPADPVGEYPRASRRFESALLHIEVLSAMNIEKLLGGFANVAAILTPLVAVLAYSRFLWERRQKRLRLESYLREQKLFECTGQHSFLHLVATLGMFEADIMDASYRSKVISRNVAVDVAGEPVRIVLEYEPDDLEKELPKRPGRGQF.

A helical membrane pass occupies residues 47 to 67 (LLGGFANVAAILTPLVAVLAY).

The protein resides in the membrane. This is an uncharacterized protein from Sinorhizobium fredii (strain NBRC 101917 / NGR234).